The sequence spans 664 residues: NAD(P)H-quinone oxidoreductase chain 5 (664 aa).

Helical transmembrane passes span 7–27 (YAWL…IGLI), 39–59 (LNAV…FGLL), 91–111 (HLSA…MIYT), 120–140 (GYVR…GLVF), 144–164 (LVQV…LIGF), 187–207 (FGLL…EFDL), 219–239 (GQIS…GPVA), 258–278 (TPIS…FLVA), 290–310 (AMNV…TIAL), 327–347 (LGYM…FHLM), 352–372 (FKAM…EVVG), 395–415 (ATTF…AGFW), 420–440 (ILGL…ATAG), 495–515 (FPLM…VPWG), 541–561 (FLIM…IASL), and 643–663 (VQFY…FFSV).

Belongs to the complex I subunit 5 family.

Its subcellular location is the cell membrane. The catalysed reaction is a plastoquinone + NADH + (n+1) H(+)(in) = a plastoquinol + NAD(+) + n H(+)(out). It carries out the reaction a plastoquinone + NADPH + (n+1) H(+)(in) = a plastoquinol + NADP(+) + n H(+)(out). Its function is as follows. NDH-1 shuttles electrons from NAD(P)H, via FMN and iron-sulfur (Fe-S) centers, to quinones in the respiratory chain. The immediate electron acceptor for the enzyme in this species is believed to be plastoquinone. Couples the redox reaction to proton translocation (for every two electrons transferred, four hydrogen ions are translocated across the cytoplasmic membrane), and thus conserves the redox energy in a proton gradient. The sequence is that of NAD(P)H-quinone oxidoreductase chain 5 (ndhF) from Picosynechococcus sp. (strain ATCC 27264 / PCC 7002 / PR-6) (Agmenellum quadruplicatum).